The following is a 171-amino-acid chain: N5-carboxyaminoimidazole ribonucleotide mutase (171 aa).

Ser-10, Asp-13, and Arg-40 together coordinate substrate.

This sequence belongs to the AIR carboxylase family. Class I subfamily.

The enzyme catalyses 5-carboxyamino-1-(5-phospho-D-ribosyl)imidazole + H(+) = 5-amino-1-(5-phospho-D-ribosyl)imidazole-4-carboxylate. It participates in purine metabolism; IMP biosynthesis via de novo pathway; 5-amino-1-(5-phospho-D-ribosyl)imidazole-4-carboxylate from 5-amino-1-(5-phospho-D-ribosyl)imidazole (N5-CAIR route): step 2/2. Functionally, catalyzes the conversion of N5-carboxyaminoimidazole ribonucleotide (N5-CAIR) to 4-carboxy-5-aminoimidazole ribonucleotide (CAIR). The polypeptide is N5-carboxyaminoimidazole ribonucleotide mutase (Thermotoga maritima (strain ATCC 43589 / DSM 3109 / JCM 10099 / NBRC 100826 / MSB8)).